The primary structure comprises 182 residues: Dynactin subunit 5 (182 aa).

Methionine 1 is modified (N-acetylmethionine).

It belongs to the dynactin subunits 5/6 family. Dynactin subunit 5 subfamily. In terms of assembly, subunit of dynactin, a multiprotein complex part of a tripartite complex with dynein and a adapter, such as BICDL1, BICD2 or HOOK3. The dynactin complex is built around ACTR1A/ACTB filament and consists of an actin-related filament composed of a shoulder domain, a pointed end and a barbed end. Its length is defined by its flexible shoulder domain. The soulder is composed of 2 DCTN1 subunits, 4 DCTN2 and 2 DCTN3. The 4 DCNT2 (via N-terminus) bind the ACTR1A filament and act as molecular rulers to determine the length. The pointed end is important for binding dynein-dynactin cargo adapters. Consists of 4 subunits: ACTR10, DCNT4, DCTN5 and DCTN6. Within the complex DCTN6 forms a heterodimer with DCTN5. The barbed end is composed of a CAPZA1:CAPZB heterodimers, which binds ACTR1A/ACTB filament and dynactin and stabilizes dynactin. Interacts with N4BP2L1.

The protein resides in the cytoplasm. Its subcellular location is the cytoskeleton. It localises to the chromosome. It is found in the centromere. The protein localises to the kinetochore. Part of the dynactin complex that activates the molecular motor dynein for ultra-processive transport along microtubules. This is Dynactin subunit 5 from Homo sapiens (Human).